Here is a 334-residue protein sequence, read N- to C-terminus: Thioredoxin reductase (334 aa).

FAD contacts are provided by residues 11–14 (SGAG), 40–41 (TA), glutamine 45, asparagine 54, cysteine 148, aspartate 294, and 301–303 (RQA). A disulfide bridge connects residues cysteine 145 and cysteine 148.

It belongs to the class-II pyridine nucleotide-disulfide oxidoreductase family. Homodimer. FAD serves as cofactor.

It catalyses the reaction [thioredoxin]-dithiol + NADP(+) = [thioredoxin]-disulfide + NADPH + H(+). Its function is as follows. Component of the thioredoxin-thioredoxin reductase system which may be involved in biosynthesis of penicillins and cephalosporins and may be important in determining the thiol-disulfide redox balance. The protein is Thioredoxin reductase (TRR1) of Penicillium chrysogenum (Penicillium notatum).